The primary structure comprises 213 residues: 3-isopropylmalate dehydratase small subunit (213 aa).

The protein belongs to the LeuD family. LeuD type 1 subfamily. In terms of assembly, heterodimer of LeuC and LeuD.

It catalyses the reaction (2R,3S)-3-isopropylmalate = (2S)-2-isopropylmalate. Its pathway is amino-acid biosynthesis; L-leucine biosynthesis; L-leucine from 3-methyl-2-oxobutanoate: step 2/4. Functionally, catalyzes the isomerization between 2-isopropylmalate and 3-isopropylmalate, via the formation of 2-isopropylmaleate. The sequence is that of 3-isopropylmalate dehydratase small subunit from Aromatoleum aromaticum (strain DSM 19018 / LMG 30748 / EbN1) (Azoarcus sp. (strain EbN1)).